A 207-amino-acid chain; its full sequence is MRLFRVLLLSAVAFALSPAQADERSIQRLTQLLDRAQTLTARFSQLSLDGSGTQLQETSGEMALKRPGLFRWHTDAPQEQLLVSNGKTVWLYDPDLEQVTVRSLDQRLTHTPALLLSGDLSKIGENFEITHKEAGGVVDFILKPKSKDTLFDNLRLSFRDGVVNDMQLIDGVGQRTNILFFGVKMNQSLDAAQFDFKVPEGTDVIQE.

The signal sequence occupies residues 1–21 (MRLFRVLLLSAVAFALSPAQA).

The protein belongs to the LolA family. Monomer.

Its subcellular location is the periplasm. Functionally, participates in the translocation of lipoproteins from the inner membrane to the outer membrane. Only forms a complex with a lipoprotein if the residue after the N-terminal Cys is not an aspartate (The Asp acts as a targeting signal to indicate that the lipoprotein should stay in the inner membrane). The protein is Outer-membrane lipoprotein carrier protein of Azotobacter vinelandii (strain DJ / ATCC BAA-1303).